Here is a 354-residue protein sequence, read N- to C-terminus: Protein-arginine kinase (354 aa).

Positions 24–254 (IVLSSRIRLA…QQIIQQEKMA (231 aa)) constitute a Phosphagen kinase C-terminal domain. ATP contacts are provided by residues 27–31 (SSRIR), histidine 92, arginine 125, 176–180 (RASVM), and 207–212 (RGIYGE). Residues 337 to 342 (RDYRRA) carry the RDXXRA motif of the pArg binding pocket involved in allosteric regulation motif.

This sequence belongs to the ATP:guanido phosphotransferase family.

It carries out the reaction L-arginyl-[protein] + ATP = N(omega)-phospho-L-arginyl-[protein] + ADP + H(+). With respect to regulation, appears to be allosterically activated by the binding of pArg-containing polypeptides to the pArg-binding pocket localized in the C-terminal domain of McsB. Its function is as follows. Catalyzes the specific phosphorylation of arginine residues in a large number of proteins. Is part of the bacterial stress response system. Protein arginine phosphorylation has a physiologically important role and is involved in the regulation of many critical cellular processes, such as protein homeostasis, motility, competence, and stringent and stress responses, by regulating gene expression and protein activity. In Bacillus thuringiensis subsp. konkukian (strain 97-27), this protein is Protein-arginine kinase.